The following is a 55-amino-acid chain: Large ribosomal subunit protein bL33 (55 aa).

This sequence belongs to the bacterial ribosomal protein bL33 family.

The sequence is that of Large ribosomal subunit protein bL33 from Erythrobacter litoralis (strain HTCC2594).